Here is a 449-residue protein sequence, read N- to C-terminus: Kynurenine 3-monooxygenase (449 aa).

This sequence belongs to the aromatic-ring hydroxylase family. KMO subfamily. FAD is required as a cofactor.

It carries out the reaction L-kynurenine + NADPH + O2 + H(+) = 3-hydroxy-L-kynurenine + NADP(+) + H2O. The protein operates within cofactor biosynthesis; NAD(+) biosynthesis; quinolinate from L-kynurenine: step 1/3. In terms of biological role, catalyzes the hydroxylation of L-kynurenine (L-Kyn) to form 3-hydroxy-L-kynurenine (L-3OHKyn). Required for synthesis of quinolinic acid. The sequence is that of Kynurenine 3-monooxygenase from Legionella pneumophila (strain Corby).